The sequence spans 1025 residues: Multidrug resistance protein MdtC (1025 aa).

Helical transmembrane passes span 3-23 (FFAL…AITL), 333-353 (EVEQ…FLFL), 360-380 (IIPA…MYLC), 387-407 (LSLM…IVVL), 431-451 (VGFT…PLLL), 463-483 (FAVT…TLTP), 528-548 (LVGV…ISIP), 853-873 (VILI…LYES), 875-895 (VHPL…LLAL), 897-917 (LFNA…IGIV), 953-973 (PIMM…LSGG), and 984-1004 (ITIV…TPVV).

This sequence belongs to the resistance-nodulation-cell division (RND) (TC 2.A.6) family. MdtC subfamily. In terms of assembly, part of a tripartite efflux system composed of MdtA, MdtB and MdtC. MdtC forms a heteromultimer with MdtB.

It is found in the cell inner membrane. The MdtABC tripartite complex confers resistance against novobiocin and deoxycholate. In Escherichia fergusonii (strain ATCC 35469 / DSM 13698 / CCUG 18766 / IAM 14443 / JCM 21226 / LMG 7866 / NBRC 102419 / NCTC 12128 / CDC 0568-73), this protein is Multidrug resistance protein MdtC.